Consider the following 174-residue polypeptide: RNA pyrophosphohydrolase (174 aa).

Residues glycine 6–lysine 149 enclose the Nudix hydrolase domain. The Nudix box motif lies at glycine 38–glycine 59.

Belongs to the Nudix hydrolase family. RppH subfamily. A divalent metal cation serves as cofactor.

In terms of biological role, accelerates the degradation of transcripts by removing pyrophosphate from the 5'-end of triphosphorylated RNA, leading to a more labile monophosphorylated state that can stimulate subsequent ribonuclease cleavage. This Neisseria meningitidis serogroup A / serotype 4A (strain DSM 15465 / Z2491) protein is RNA pyrophosphohydrolase.